Reading from the N-terminus, the 117-residue chain is MAWTPLFLFLLTCCPGSNSQAVVTQEPSLTVSPGGTVTLTCGSSTGAVTSGHYPYWFQQKPGQAPRTLIYDTSNKHSWTPARFSGSLLGGKAALTLLGAQPEDEAEYYCLLSYSGAR.

An N-terminal signal peptide occupies residues 1–19 (MAWTPLFLFLLTCCPGSNS). The tract at residues 20-44 (QAVVTQEPSLTVSPGGTVTLTCGSS) is framework-1. The region spanning 20–117 (QAVVTQEPSL…YCLLSYSGAR (98 aa)) is the Ig-like domain. The cysteines at positions 41 and 109 are disulfide-linked. The segment at 45-53 (TGAVTSGHY) is complementarity-determining-1. The framework-2 stretch occupies residues 54 to 70 (PYWFQQKPGQAPRTLIY). The interval 71 to 73 (DTS) is complementarity-determining-2. Residues 74-109 (NKHSWTPARFSGSLLGGKAALTLLGAQPEDEAEYYC) form a framework-3 region. A complementarity-determining-3 region spans residues 110 to 117 (LLSYSGAR).

Immunoglobulins are composed of two identical heavy chains and two identical light chains; disulfide-linked.

It localises to the secreted. The protein resides in the cell membrane. Functionally, v region of the variable domain of immunoglobulin light chains that participates in the antigen recognition. Immunoglobulins, also known as antibodies, are membrane-bound or secreted glycoproteins produced by B lymphocytes. In the recognition phase of humoral immunity, the membrane-bound immunoglobulins serve as receptors which, upon binding of a specific antigen, trigger the clonal expansion and differentiation of B lymphocytes into immunoglobulins-secreting plasma cells. Secreted immunoglobulins mediate the effector phase of humoral immunity, which results in the elimination of bound antigens. The antigen binding site is formed by the variable domain of one heavy chain, together with that of its associated light chain. Thus, each immunoglobulin has two antigen binding sites with remarkable affinity for a particular antigen. The variable domains are assembled by a process called V-(D)-J rearrangement and can then be subjected to somatic hypermutations which, after exposure to antigen and selection, allow affinity maturation for a particular antigen. This Homo sapiens (Human) protein is Immunoglobulin lambda variable 7-46.